Reading from the N-terminus, the 931-residue chain is Isoleucine--tRNA ligase (931 aa).

Residues 58–68 (PYANGHLHCGH) carry the 'HIGH' region motif. Position 559 (E559) interacts with L-isoleucyl-5'-AMP. The short motif at 600 to 604 (KLSKS) is the 'KMSKS' region element. An ATP-binding site is contributed by K603. The Zn(2+) site is built by C894, C897, C914, and C917.

The protein belongs to the class-I aminoacyl-tRNA synthetase family. IleS type 1 subfamily. As to quaternary structure, monomer. Requires Zn(2+) as cofactor.

It is found in the cytoplasm. It catalyses the reaction tRNA(Ile) + L-isoleucine + ATP = L-isoleucyl-tRNA(Ile) + AMP + diphosphate. In terms of biological role, catalyzes the attachment of isoleucine to tRNA(Ile). As IleRS can inadvertently accommodate and process structurally similar amino acids such as valine, to avoid such errors it has two additional distinct tRNA(Ile)-dependent editing activities. One activity is designated as 'pretransfer' editing and involves the hydrolysis of activated Val-AMP. The other activity is designated 'posttransfer' editing and involves deacylation of mischarged Val-tRNA(Ile). In Legionella pneumophila (strain Lens), this protein is Isoleucine--tRNA ligase.